The following is a 241-amino-acid chain: MQNNNDILKAQSPAALAEEYIVKSIWQDVFPSGSNLPSERDLADKIGVTRTTLREVLQRLARDGWLTIQHGKPTKVNNIWDAAGPNIIETLIALDMQSAPLIIDNMLSLRSKMSESYIYEAVKNSPQKSTALFAELEQLQNTAQDYTEFDYQLFRQFTVVANKPFYRLIFNSLKGVYQRIGLLFFKEKKHRELTKQFYLEMQQICLEGNADAVVDCIRKHNLRSSTYWKAILERLPQNLSD.

Residues 11 to 79 (QSPAALAEEY…HGKPTKVNNI (69 aa)) enclose the HTH gntR-type domain. Residues 39-58 (ERDLADKIGVTRTTLREVLQ) constitute a DNA-binding region (H-T-H motif).

In terms of assembly, homodimer.

It localises to the cytoplasm. In terms of biological role, multifunctional regulator of fatty acid metabolism. This Haemophilus influenzae (strain 86-028NP) protein is Fatty acid metabolism regulator protein.